The primary structure comprises 228 residues: DNA mismatch repair protein MutH (228 aa).

The protein belongs to the MutH family.

The protein localises to the cytoplasm. In terms of biological role, sequence-specific endonuclease that cleaves unmethylated GATC sequences. It is involved in DNA mismatch repair. The polypeptide is DNA mismatch repair protein MutH (Yersinia pseudotuberculosis serotype IB (strain PB1/+)).